The sequence spans 1974 residues: Protein Ycf2 (1974 aa).

The disordered stretch occupies residues 219 to 246 (SQLKGSSYQSRDHLDSISNEDSEYHNQR). Residue 1308-1315 (GSIGTGRS) participates in ATP binding.

Belongs to the Ycf2 family.

The protein localises to the plastid. Its subcellular location is the chloroplast stroma. Probable ATPase of unknown function. Its presence in a non-photosynthetic plant (Epifagus virginiana) and experiments in tobacco indicate that it has an essential function which is probably not related to photosynthesis. The chain is Protein Ycf2 from Jasminum nudiflorum (Winter jasmine).